We begin with the raw amino-acid sequence, 30 residues long: Rothein 3.1 (30 aa).

Leu30 is subject to Leucine amide.

In terms of tissue distribution, expressed by the skin dorsal glands.

It is found in the secreted. Lacks antimicrobial activity. Does not inhibit the formation of NO by neuronal nitric oxide. The chain is Rothein 3.1 from Litoria rothii (Roth's tree frog).